The following is a 495-amino-acid chain: DUF21 domain-containing protein At4g14230 (495 aa).

The Extracellular segment spans residues Met1 to Cys42. The CNNM transmembrane domain occupies Gly30–Glu212. Residues Phe43–Leu63 traverse the membrane as a helical segment. At Val64 to His92 the chain is on the cytoplasmic side. Residues Gln93–Leu113 form a helical membrane-spanning segment. At Asp114–Tyr120 the chain is on the extracellular side. Residues Val121–Ile141 form a helical membrane-spanning segment. At Cys142–Gly146 the chain is on the cytoplasmic side. The helical transmembrane segment at Leu147–Ile167 threads the bilayer. The Extracellular portion of the chain corresponds to Ser168–Asn495. CBS domains lie at Met231–Leu291, Gly296–Glu356, and Leu357–Glu426. Positions Lys330 to Asn354 are disordered. Asn349 is a glycosylation site (N-linked (GlcNAc...) asparagine). Position 352 is a phosphoserine (Ser352). Asn353 is a glycosylation site (N-linked (GlcNAc...) asparagine). Positions Ser455–Asn495 are disordered. The span at Gly456–Pro477 shows a compositional bias: low complexity.

It localises to the membrane. The sequence is that of DUF21 domain-containing protein At4g14230 (CBSDUF2) from Arabidopsis thaliana (Mouse-ear cress).